The following is an 87-amino-acid chain: Selenoprotein W (87 aa).

A cross-link (cysteinyl-selenocysteine (Cys-Sec); redox-active) is located at residues 10–13; it reads CGAU. A non-standard amino acid (selenocysteine) is located at residue selenocysteine 13. At cysteine 37 the chain carries S-glutathionyl cysteine.

It belongs to the SelWTH family. Selenoprotein W subfamily. In terms of assembly, interacts with DPYSL2, PRDX1, YWHAB, YWHAG, HSP70 and HSP90. In terms of tissue distribution, detected in muscle, heart, tongue, brain, lung, spleen, kidney and liver. Highest levels expressed in muscle and heart whereas lowest levels detected in liver (at protein level).

The protein localises to the cytoplasm. Plays a role as a glutathione (GSH)-dependent antioxidant. May be involved in a redox-related process. May play a role in the myopathies of selenium deficiency. In Ovis aries (Sheep), this protein is Selenoprotein W.